The primary structure comprises 323 residues: Syntaxin-42 (323 aa).

Residues 1–302 (MATRNRTTVY…QREGAMVKCA (302 aa)) are Cytoplasmic-facing. Residues 227 to 289 (QHVSAERERE…EEGYKQLQKA (63 aa)) form the t-SNARE coiled-coil homology domain. Residues 303-323 (TILLVLCLIMIVLLILKNILF) form a helical; Anchor for type IV membrane protein membrane-spanning segment.

The protein belongs to the syntaxin family. As to quaternary structure, interacts with VTI12 and SYP61 to form a t-SNARE complex and with VPS45. In terms of tissue distribution, expressed at low levels in roots, stems, flowers and leaves.

It localises to the golgi apparatus. Its subcellular location is the trans-Golgi network membrane. Contributes to the regulation of secretory and vacuolar transport pathways in the post-Golgi network, and to the maintenance of the Golgi apparatus and trans-Golgi network (TGN) morphologies. Vesicle trafficking protein that functions in the secretory pathway and mediates liposome fusion. Required for extracellular resistance responses to a fungal pathogen. Also involved in the protection of chloroplasts from salicylic acid-dependent biotic stress. The chain is Syntaxin-42 from Arabidopsis thaliana (Mouse-ear cress).